Reading from the N-terminus, the 226-residue chain is Neuromodulin (226 aa).

The tract at residues 1–226 is disordered; that stretch reads MLCCMRRTKQ…EDPEADQEHA (226 aa). S-palmitoyl cysteine attachment occurs at residues Cys3 and Cys4. A compositionally biased stretch (basic and acidic residues) spans 9–32; it reads KQVEKNDEDQKIEQDGVKPEDKAH. The 30-residue stretch at 31–60 folds into the IQ domain; it reads AHKAATKIQASFRGHITRKKLKDEKKGDAP. Ser41 carries the post-translational modification Phosphoserine; by PHK and PKC. Residues 51–84 are compositionally biased toward basic and acidic residues; that stretch reads LKDEKKGDAPAAEAEAKEKDDAPVADGVEKKEGD. The segment covering 85-97 has biased composition (low complexity); sequence GSATTDAAPATSP. A phosphoserine mark is found at Ser86 and Ser96. The segment covering 98-127 has biased composition (basic and acidic residues); it reads KAEEPSKAGDAPSEEKKGEGDAAPSEEKAG. A compositionally biased stretch (low complexity) spans 128–139; it reads SAETESAAKATT. Phosphoserine is present on residues Ser142, Ser144, and Ser145. The span at 146–158 shows a compositional bias: basic and acidic residues; it reads KAEDGPAKEEPKQ. Over residues 159–192 the composition is skewed to low complexity; it reads ADVPAAVTDAAATTPAAEDAAKAAQPPTETAESS. Thr172 carries the post-translational modification Phosphothreonine. Phosphoserine occurs at positions 191 and 192. The span at 201 to 214 shows a compositional bias: basic and acidic residues; the sequence is VDEAKPKESARQDE. Residues 215-226 show a composition bias toward acidic residues; sequence GKEDPEADQEHA.

This sequence belongs to the neuromodulin family. Identified in a complex containing FGFR4, NCAM1, CDH2, PLCG1, FRS2, SRC, SHC1, GAP43 and CTTN. Interacts (via IQ domain) with calmodulin. Binds calmodulin with a greater affinity in the absence of Ca(2+) than in its presence. In terms of processing, phosphorylated. Phosphorylation of this protein by a protein kinase C is specifically correlated with certain forms of synaptic plasticity. Palmitoylated by ZDHHC3. Palmitoylation is regulated by ARF6 and is essential for plasma membrane association and axonal and dendritic filopodia induction. Deacylated by LYPLA2. Expressed in hippocampal neurons, with highest levels of expression in the CA4 and CA3 neurons and lower levels in CA1 neurons. Expressed in the dorsal root ganglion.

Its subcellular location is the cell membrane. The protein resides in the cell projection. It localises to the growth cone. It is found in the growth cone membrane. The protein localises to the synapse. Its subcellular location is the filopodium membrane. The protein resides in the perikaryon. It localises to the dendrite. It is found in the axon. The protein localises to the cytoplasm. Functionally, this protein is associated with nerve growth. It is a major component of the motile 'growth cones' that form the tips of elongating axons. Plays a role in axonal and dendritic filopodia induction. The protein is Neuromodulin (Gap43) of Rattus norvegicus (Rat).